The chain runs to 368 residues: 2-aminoethylphosphonate--pyruvate transaminase (368 aa).

Residue lysine 192 is modified to N6-(pyridoxal phosphate)lysine.

The protein belongs to the class-V pyridoxal-phosphate-dependent aminotransferase family. PhnW subfamily. As to quaternary structure, homodimer. It depends on pyridoxal 5'-phosphate as a cofactor.

It catalyses the reaction (2-aminoethyl)phosphonate + pyruvate = phosphonoacetaldehyde + L-alanine. Involved in phosphonate degradation. The protein is 2-aminoethylphosphonate--pyruvate transaminase of Pseudomonas putida (strain ATCC 47054 / DSM 6125 / CFBP 8728 / NCIMB 11950 / KT2440).